We begin with the raw amino-acid sequence, 101 residues long: Protein S100-A4 (101 aa).

Ala2 bears the N-acetylalanine mark. 2 EF-hand domains span residues 12-47 (IVST…SFLG) and 50-85 (TDEA…IAMM). Lys28 and Glu33 together coordinate Ca(2+). An N6-acetyllysine modification is found at Lys35. Ca(2+) is bound by residues Asp63, Asn65, Asp67, Glu69, and Glu74.

It belongs to the S-100 family. Homodimer. Interacts with PPFIBP1 in a calcium-dependent mode. Interacts with PGLYRP1; this complex acts as a chemoattractant that promotes lymphocyte movement. Interacts with MYH9; this interaction increases cell motility. Interacts with Annexin 2/ANXA2. Interacts with TP53; this interaction promotes TP53 degradation. Interacts with CCR5 and CXCR3. Interacts with FCGR3A; this interaction inhibits PKC-dependent phosphorylation of FCGR3A. As to expression, specifically expressed in different metastatic cells.

The protein localises to the secreted. It is found in the nucleus. The protein resides in the cytoplasm. Its function is as follows. Calcium-binding protein that plays a role in various cellular processes including motility, angiogenesis, cell differentiation, apoptosis, and autophagy. Increases cell motility and invasiveness by interacting with non-muscle myosin heavy chain (NMMHC) IIA/MYH9. Mechanistically, promotes filament depolymerization and increases the amount of soluble myosin-IIA, resulting in the formation of stable protrusions facilitating chemotaxis. Also modulates the pro-apoptotic function of TP53 by binding to its C-terminal transactivation domain within the nucleus and reducing its protein levels. Within the extracellular space, stimulates cytokine production including granulocyte colony-stimulating factor and CCL24 from T-lymphocytes. In addition, stimulates T-lymphocyte chemotaxis by acting as a chemoattractant complex with PGLYRP1 that promotes lymphocyte migration via CCR5 and CXCR3 receptors. The chain is Protein S100-A4 (S100a4) from Mus musculus (Mouse).